Here is a 140-residue protein sequence, read N- to C-terminus: Histone H2B.1, sperm (140 aa).

Residues 1 to 47 are disordered; it reads MPSQRSPTKRSPTKRSPQKGAGKGGKGSKRGGKARRRGGAAVRRRRR. Short sequence motifs (SPKK motif) lie at residues 6–9, 11–14, and 16–19; these read SPTK and SPQK. 2 stretches are compositionally biased toward basic residues: residues 7–17 and 26–47; these read PTKRSPTKRSP and KGSK…RRRR. Residues serine 11 and serine 16 each carry the phosphoserine modification. Serine 127 carries O-linked (GlcNAc) serine glycosylation. Lysine 135 participates in a covalent cross-link: Glycyl lysine isopeptide (Lys-Gly) (interchain with G-Cter in ubiquitin).

The protein belongs to the histone H2B family. In terms of assembly, the nucleosome is a histone octamer containing two molecules each of H2A, H2B, H3 and H4 assembled in one H3-H4 heterotetramer and two H2A-H2B heterodimers. The octamer wraps approximately 147 bp of DNA. In terms of processing, monoubiquitination of Lys-135 gives a specific tag for epigenetic transcriptional activation and is also prerequisite for histone H3 'Lys-4' and 'Lys-79' methylation. Post-translationally, phosphorylated on SPKK motifs 2 and 3; which may regulate DNA binding. Dephosphorylated during maturation of spermatids to mature sperm and rephosphorylated at fertilization. GlcNAcylation at Ser-127 promotes monoubiquitination of Lys-135. It fluctuates in response to extracellular glucose, and associates with transcribed genes.

It localises to the nucleus. Its subcellular location is the chromosome. Core component of nucleosome. Nucleosomes wrap and compact DNA into chromatin, limiting DNA accessibility to the cellular machineries which require DNA as a template. Histones thereby play a central role in transcription regulation, DNA repair, DNA replication and chromosomal stability. DNA accessibility is regulated via a complex set of post-translational modifications of histones, also called histone code, and nucleosome remodeling. In Strongylocentrotus purpuratus (Purple sea urchin), this protein is Histone H2B.1, sperm.